We begin with the raw amino-acid sequence, 962 residues long: Probable transport protein MmpL9 (962 aa).

The next 12 membrane-spanning stretches (helical) occupy residues 25–45 (LAAI…SVAV), 201–223 (LITG…SIAT), 225–247 (LLIL…FLGY), 256–276 (FVVN…AIFL), 302–322 (ANVI…LSFA), 335–355 (AIGM…IIAI), 383–403 (WPGP…LALP), 768–788 (YDIL…MLMI), 796–816 (LVIV…SVLI), 820–840 (FVGL…LLAV), 867–887 (AMAG…FTMA), and 895–915 (RVIG…TLVV).

It belongs to the resistance-nodulation-cell division (RND) (TC 2.A.6) family. MmpL subfamily.

Its subcellular location is the cell membrane. The protein is Probable transport protein MmpL9 (mmpL9) of Mycobacterium tuberculosis (strain ATCC 25618 / H37Rv).